The following is a 442-amino-acid chain: Protein phosphatase 2C 3 (442 aa).

A disordered region spans residues 30-100; it reads RFRMSPSEMN…VSISDGNSSV (71 aa). Over residues 79-90 the composition is skewed to acidic residues; the sequence is PEEESVSLEDSD. One can recognise a PPM-type phosphatase domain in the interval 120–433; that stretch reads RYGVASVCGR…DNVSVVVIDL (314 aa). Positions 162, 163, and 339 each coordinate Mn(2+). A disordered region spans residues 363-401; that stretch reads GRGRRRGETQTPGRRSEEEGKEEEEKVVGSRKNGKRGEI. The span at 376–390 shows a compositional bias: basic and acidic residues; it reads RRSEEEGKEEEEKVV. Aspartate 424 provides a ligand contact to Mn(2+).

The protein belongs to the PP2C family. As to quaternary structure, part of a K(+)-channel calcium-sensing kinase/phosphatase complex composed by a calcium sensor CBL (CBL1, CBL2, CBL3 or CBL9), a kinase CIPK (CIPK6, CIPK16 or CIPK23), a phosphatase PP2C (AIP1) and a K(+)-channel (AKT1). Interacts with AKT1 and CIPK23. Interacts with PYL8/RCAR3 in an abscisic acid-independent. Interacts with PYR1/RCAR11 in an abscisic acid-dependent manner. The cofactor is Mg(2+). It depends on Mn(2+) as a cofactor. As to expression, expressed in shoot meristem, vascular tissues of cotyledons, and in primary roots surrounding the root meristem. Highly expressed in seeds.

It localises to the cell membrane. Its subcellular location is the cytoplasm. It is found in the nucleus. It catalyses the reaction O-phospho-L-seryl-[protein] + H2O = L-seryl-[protein] + phosphate. The catalysed reaction is O-phospho-L-threonyl-[protein] + H2O = L-threonyl-[protein] + phosphate. In terms of biological role, involved in the negative regulation of the K(+) potassium channel AKT1 by its dephosphorylation, antagonistically to CIPK proteins (e.g. CIPK23). Functions as a positive regulator of abscisic acid-mediated cell signaling during seedling growth. Involved in the regulation of seed dormancy. Acts as a negative regulator of seed dormancy by inhibiting abscisic signaling and subsequently activating gibberellic acid signaling. The chain is Protein phosphatase 2C 3 from Arabidopsis thaliana (Mouse-ear cress).